Consider the following 328-residue polypeptide: Cytochrome c biogenesis protein CcsA (328 aa).

The next 8 helical transmembrane spans lie at 13 to 33 (ISFSVVLIVMTIYFLTLLVNL), 46 to 66 (GIVITFFSITGFLFTRWIYSG), 73 to 93 (LYESLIFLSWAFSIIHMVSYF), 101 to 121 (LNAITAPSAIFIQGFATSGLL), 146 to 166 (MVLGYGALLCGSLLSIALLVI), 234 to 254 (IISLGFLFLTMGILSGAVWAN), 263 to 283 (WDPKETWAFITWTIFAIYLHI), and 295 to 315 (AIVASIGFLVIWICYFGVNLL).

The protein belongs to the CcmF/CycK/Ccl1/NrfE/CcsA family. As to quaternary structure, may interact with Ccs1.

The protein localises to the plastid. It localises to the chloroplast thylakoid membrane. Functionally, required during biogenesis of c-type cytochromes (cytochrome c6 and cytochrome f) at the step of heme attachment. The polypeptide is Cytochrome c biogenesis protein CcsA (Aethionema cordifolium (Lebanon stonecress)).